A 29-amino-acid chain; its full sequence is Cyclotide vibi-B (29 aa).

Positions 1 to 29 form a cross-link, cyclopeptide (Gly-Asn); it reads GLPVCGETCFGGTCNTPGCTCSYPICTRN. 3 disulfide bridges follow: Cys-5/Cys-19, Cys-9/Cys-21, and Cys-14/Cys-26.

In terms of processing, this is a cyclic peptide.

In terms of biological role, probably participates in a plant defense mechanism. The protein is Cyclotide vibi-B of Viola biflora (Yellow wood violet).